An 89-amino-acid polypeptide reads, in one-letter code: MSLNAETKAAIVAEYAQSEGDTGSPEVQVALLTASINHLQGHFKAHKHDHHSRRGLLRMVSSRRKLLDYLKGKNLTRYQDLIKRLGLRR.

The protein belongs to the universal ribosomal protein uS15 family. In terms of assembly, part of the 30S ribosomal subunit. Forms a bridge to the 50S subunit in the 70S ribosome, contacting the 23S rRNA.

Its function is as follows. One of the primary rRNA binding proteins, it binds directly to 16S rRNA where it helps nucleate assembly of the platform of the 30S subunit by binding and bridging several RNA helices of the 16S rRNA. Functionally, forms an intersubunit bridge (bridge B4) with the 23S rRNA of the 50S subunit in the ribosome. This is Small ribosomal subunit protein uS15 from Vibrio atlanticus (strain LGP32) (Vibrio splendidus (strain Mel32)).